The primary structure comprises 739 residues: Probable endo-1,3(4)-beta-glucanase An02g00850 (739 aa).

The N-terminal stretch at 1–24 (MPTSTLLWSVGSLALSSMVLPAAA) is a signal peptide. The region spanning 31–283 (ETWKGEDFLT…WAGGVYSTSG (253 aa)) is the GH16 domain. N-linked (GlcNAc...) asparagine glycosylation is found at Asn-59 and Asn-74. Glu-140 serves as the catalytic Nucleophile. Glu-145 acts as the Proton donor in catalysis. An N-linked (GlcNAc...) asparagine glycan is attached at Asn-396. 3 stretches are compositionally biased toward low complexity: residues 431-442 (SEATEASNSEGS), 452-499 (TGAS…AGAT), and 507-522 (GASGEADSSEGASAAA). A disordered region spans residues 431-718 (SEATEASNSE…TPSTPVFTGG (288 aa)). 2 N-linked (GlcNAc...) asparagine glycosylation sites follow: Asn-459 and Asn-482. Polar residues predominate over residues 523-532 (TPSNVSSTGA). N-linked (GlcNAc...) asparagine glycans are attached at residues Asn-526 and Asn-537. Polar residues predominate over residues 539 to 548 (SEDSSASSEA). Positions 561–587 (GASAEANGNDSASSNAATASNVSGASA) are enriched in low complexity. Residues Asn-569, Asn-581, Asn-592, and Asn-620 are each glycosylated (N-linked (GlcNAc...) asparagine). The span at 597–641 (ASAGANAGSSAAPSSVSGASAEANGSEGSSSHSSGSQAGAHSYGS) shows a compositional bias: low complexity. A compositionally biased stretch (polar residues) spans 654 to 673 (PSSSSHAFATAPSSTGSSRV). The span at 674-713 (PTSAAAANNAAAATQGSSASGSNSGSSGHGSSSATTPSTP) shows a compositional bias: low complexity. Residue Gly-717 is the site of GPI-anchor amidated glycine attachment. Positions 718–739 (GANKLTLGASSVLSVLAFALLA) are cleaved as a propeptide — removed in mature form.

Belongs to the glycosyl hydrolase 16 family.

It is found in the cell membrane. It carries out the reaction Endohydrolysis of (1-&gt;3)- or (1-&gt;4)-linkages in beta-D-glucans when the glucose residue whose reducing group is involved in the linkage to be hydrolyzed is itself substituted at C-3.. Functionally, mixed-linked glucanase involved in the degradation of complex natural cellulosic substrates. The sequence is that of Probable endo-1,3(4)-beta-glucanase An02g00850 from Aspergillus niger (strain ATCC MYA-4892 / CBS 513.88 / FGSC A1513).